Here is a 307-residue protein sequence, read N- to C-terminus: Aspartate carbamoyltransferase catalytic subunit (307 aa).

Carbamoyl phosphate is bound by residues Arg-54 and Thr-55. Lys-83 lines the L-aspartate pocket. Arg-104, His-132, and Gln-135 together coordinate carbamoyl phosphate. L-aspartate contacts are provided by Arg-165 and Arg-228. Residues Leu-267 and Pro-268 each coordinate carbamoyl phosphate.

The protein belongs to the aspartate/ornithine carbamoyltransferase superfamily. ATCase family. As to quaternary structure, heterododecamer (2C3:3R2) of six catalytic PyrB chains organized as two trimers (C3), and six regulatory PyrI chains organized as three dimers (R2).

The enzyme catalyses carbamoyl phosphate + L-aspartate = N-carbamoyl-L-aspartate + phosphate + H(+). It participates in pyrimidine metabolism; UMP biosynthesis via de novo pathway; (S)-dihydroorotate from bicarbonate: step 2/3. In terms of biological role, catalyzes the condensation of carbamoyl phosphate and aspartate to form carbamoyl aspartate and inorganic phosphate, the committed step in the de novo pyrimidine nucleotide biosynthesis pathway. The sequence is that of Aspartate carbamoyltransferase catalytic subunit from Clostridium botulinum (strain Okra / Type B1).